Reading from the N-terminus, the 308-residue chain is Ribosomal RNA small subunit methyltransferase H (308 aa).

S-adenosyl-L-methionine contacts are provided by residues 33–35, Asp52, Phe78, Asp99, and Gln106; that span reads GGH. The disordered stretch occupies residues 289 to 308; sequence EEIETNSRSRSAKLRVAEKL.

The protein belongs to the methyltransferase superfamily. RsmH family.

Its subcellular location is the cytoplasm. It carries out the reaction cytidine(1402) in 16S rRNA + S-adenosyl-L-methionine = N(4)-methylcytidine(1402) in 16S rRNA + S-adenosyl-L-homocysteine + H(+). Functionally, specifically methylates the N4 position of cytidine in position 1402 (C1402) of 16S rRNA. The chain is Ribosomal RNA small subunit methyltransferase H from Thermoanaerobacter sp. (strain X514).